The sequence spans 120 residues: Small ribosomal subunit protein uS13 (120 aa).

The interval 93–120 is disordered; the sequence is RRGLPCRGQKTKTNARTRKGKRKTVGAA.

Belongs to the universal ribosomal protein uS13 family. Part of the 30S ribosomal subunit. Forms a loose heterodimer with protein S19. Forms two bridges to the 50S subunit in the 70S ribosome.

Functionally, located at the top of the head of the 30S subunit, it contacts several helices of the 16S rRNA. In the 70S ribosome it contacts the 23S rRNA (bridge B1a) and protein L5 of the 50S subunit (bridge B1b), connecting the 2 subunits; these bridges are implicated in subunit movement. Contacts the tRNAs in the A and P-sites. The protein is Small ribosomal subunit protein uS13 of Sulfurimonas denitrificans (strain ATCC 33889 / DSM 1251) (Thiomicrospira denitrificans (strain ATCC 33889 / DSM 1251)).